The following is a 238-amino-acid chain: Small ribosomal subunit protein eS4 (238 aa).

The region spanning 38–110 (LPLAIIIRDV…EKKYYALIPI (73 aa)) is the S4 RNA-binding domain.

Belongs to the eukaryotic ribosomal protein eS4 family.

The polypeptide is Small ribosomal subunit protein eS4 (Pyrobaculum islandicum (strain DSM 4184 / JCM 9189 / GEO3)).